A 137-amino-acid polypeptide reads, in one-letter code: ATP synthase epsilon chain (137 aa).

This sequence belongs to the ATPase epsilon chain family. As to quaternary structure, F-type ATPases have 2 components, CF(1) - the catalytic core - and CF(0) - the membrane proton channel. CF(1) has five subunits: alpha(3), beta(3), gamma(1), delta(1), epsilon(1). CF(0) has three main subunits: a, b and c.

It is found in the cell inner membrane. Functionally, produces ATP from ADP in the presence of a proton gradient across the membrane. This is ATP synthase epsilon chain from Yersinia pestis bv. Antiqua (strain Antiqua).